Reading from the N-terminus, the 266-residue chain is Type III pantothenate kinase (266 aa).

Position 9–16 (9–16 (DAGNSRIK)) interacts with ATP. Residues Y96 and 103-106 (GSDR) each bind substrate. The Proton acceptor role is filled by D105. An ATP-binding site is contributed by T129. Position 189 (T189) interacts with substrate.

This sequence belongs to the type III pantothenate kinase family. As to quaternary structure, homodimer. NH4(+) serves as cofactor. It depends on K(+) as a cofactor.

It localises to the cytoplasm. It catalyses the reaction (R)-pantothenate + ATP = (R)-4'-phosphopantothenate + ADP + H(+). The protein operates within cofactor biosynthesis; coenzyme A biosynthesis; CoA from (R)-pantothenate: step 1/5. Functionally, catalyzes the phosphorylation of pantothenate (Pan), the first step in CoA biosynthesis. This is Type III pantothenate kinase from Burkholderia lata (strain ATCC 17760 / DSM 23089 / LMG 22485 / NCIMB 9086 / R18194 / 383).